The primary structure comprises 90 residues: Cell division topological specificity factor (90 aa).

Belongs to the MinE family.

Its function is as follows. Prevents the cell division inhibition by proteins MinC and MinD at internal division sites while permitting inhibition at polar sites. This ensures cell division at the proper site by restricting the formation of a division septum at the midpoint of the long axis of the cell. The polypeptide is Cell division topological specificity factor (Pelotomaculum thermopropionicum (strain DSM 13744 / JCM 10971 / SI)).